Reading from the N-terminus, the 216-residue chain is Putative cat eye syndrome critical region protein 9 (216 aa).

The signal sequence occupies residues 1-23 (MQSHLAPLACAAAAGRAGGSCQA). Asn148 carries an N-linked (GlcNAc...) asparagine glycan.

In terms of tissue distribution, ubiquitously expressed with higher expression in heart.

It localises to the secreted. The polypeptide is Putative cat eye syndrome critical region protein 9 (CECR9) (Homo sapiens (Human)).